The primary structure comprises 366 residues: Quinolinate synthase (366 aa).

Histidine 44 and serine 61 together coordinate iminosuccinate. A [4Fe-4S] cluster-binding site is contributed by cysteine 108. Residues 139–141 and serine 160 contribute to the iminosuccinate site; that span reads YIN. Cysteine 228 provides a ligand contact to [4Fe-4S] cluster. Residues 254–256 and threonine 271 each bind iminosuccinate; that span reads HPE. Position 318 (cysteine 318) interacts with [4Fe-4S] cluster.

This sequence belongs to the quinolinate synthase family. Type 3 subfamily. [4Fe-4S] cluster is required as a cofactor.

Its subcellular location is the cytoplasm. It catalyses the reaction iminosuccinate + dihydroxyacetone phosphate = quinolinate + phosphate + 2 H2O + H(+). It functions in the pathway cofactor biosynthesis; NAD(+) biosynthesis; quinolinate from iminoaspartate: step 1/1. Functionally, catalyzes the condensation of iminoaspartate with dihydroxyacetone phosphate to form quinolinate. The chain is Quinolinate synthase from Listeria monocytogenes serovar 1/2a (strain ATCC BAA-679 / EGD-e).